We begin with the raw amino-acid sequence, 385 residues long: UPF0764 protein C16orf89 homolog (385 aa).

The first 20 residues, 1–20 (MARLGLLLLLLLALPPHFSS), serve as a signal peptide directing secretion. The disordered stretch occupies residues 344–385 (AHPEYYPNHGDPYSSSQSPASNYQDGAAGPDVQRTGRPLSVS). Residues 356–367 (YSSSQSPASNYQ) show a composition bias toward polar residues.

This sequence belongs to the UPF0764 family. Homodimer. Post-translationally, glycosylated. As to expression, predominantly expressed in thyroid tissue.

The protein resides in the secreted. The polypeptide is UPF0764 protein C16orf89 homolog (Mus musculus (Mouse)).